Consider the following 485-residue polypeptide: NGFI-A-binding protein 1 (485 aa).

Positions 4–82 (ALPRTLGELQ…RDWVTNPGLF (79 aa)) are NCD1. Glycyl lysine isopeptide (Lys-Gly) (interchain with G-Cter in SUMO2) cross-links involve residues Lys-126, Lys-129, and Lys-143. The interval 160 to 187 (WQGHHATESEHSLSPADVGSPASPKESS) is disordered. A phosphoserine mark is found at Ser-171 and Ser-182. A Glycyl lysine isopeptide (Lys-Gly) (interchain with G-Cter in SUMO2) cross-link involves residue Lys-211. The NCD2 stretch occupies residues 220–309 (LLKNNKKLAK…ARQVSREVTY (90 aa)). Residues 306 to 337 (EVTYKYTYRTTRLKCGERDELSPKRIKVEDGF) form a necessary for nuclear localization region. Position 327 is a phosphoserine (Ser-327). Lys-332 participates in a covalent cross-link: Glycyl lysine isopeptide (Lys-Gly) (interchain with G-Cter in SUMO1); alternate. A Glycyl lysine isopeptide (Lys-Gly) (interchain with G-Cter in SUMO2); alternate cross-link involves residue Lys-332. Glycyl lysine isopeptide (Lys-Gly) (interchain with G-Cter in SUMO2) cross-links involve residues Lys-354, Lys-368, and Lys-372. Positions 398–432 (RQSSGEHSPDGLPSDGSDGQGERPLNLRMPNVQNR) are disordered. Ser-405 carries the phosphoserine modification. Glycyl lysine isopeptide (Lys-Gly) (interchain with G-Cter in SUMO2) cross-links involve residues Lys-452, Lys-463, and Lys-475. Lys-478 participates in a covalent cross-link: Glycyl lysine isopeptide (Lys-Gly) (interchain with G-Cter in SUMO1); alternate. Lys-478 is covalently cross-linked (Glycyl lysine isopeptide (Lys-Gly) (interchain with G-Cter in SUMO2); alternate).

This sequence belongs to the NAB family. In terms of assembly, homomultimers may associate with EGR1 bound to DNA.

It localises to the nucleus. Acts as a transcriptional repressor for zinc finger transcription factors EGR1 and EGR2. The protein is NGFI-A-binding protein 1 (NAB1) of Mesocricetus auratus (Golden hamster).